The primary structure comprises 333 residues: UDP-N-acetylenolpyruvoylglucosamine reductase (333 aa).

Positions 12 to 176 (LPAQCRALIE…TSVVFRLPKD (165 aa)) constitute an FAD-binding PCMH-type domain. The active site involves Arg-153. Ser-221 functions as the Proton donor in the catalytic mechanism. Glu-317 is a catalytic residue.

This sequence belongs to the MurB family. The cofactor is FAD.

The protein resides in the cytoplasm. It carries out the reaction UDP-N-acetyl-alpha-D-muramate + NADP(+) = UDP-N-acetyl-3-O-(1-carboxyvinyl)-alpha-D-glucosamine + NADPH + H(+). The protein operates within cell wall biogenesis; peptidoglycan biosynthesis. Cell wall formation. The chain is UDP-N-acetylenolpyruvoylglucosamine reductase from Idiomarina loihiensis (strain ATCC BAA-735 / DSM 15497 / L2-TR).